The primary structure comprises 276 residues: Dermonecrotic toxin LlSicTox-alphaIV2iii (276 aa).

Residue His-5 is part of the active site. Residues Glu-25 and Asp-27 each contribute to the Mg(2+) site. His-41 acts as the Nucleophile in catalysis. 2 disulfides stabilise this stretch: Cys-45–Cys-51 and Cys-47–Cys-193. Asp-85 contacts Mg(2+).

This sequence belongs to the arthropod phospholipase D family. Class II subfamily. It depends on Mg(2+) as a cofactor. In terms of tissue distribution, expressed by the venom gland.

It is found in the secreted. It carries out the reaction an N-(acyl)-sphingosylphosphocholine = an N-(acyl)-sphingosyl-1,3-cyclic phosphate + choline. The catalysed reaction is an N-(acyl)-sphingosylphosphoethanolamine = an N-(acyl)-sphingosyl-1,3-cyclic phosphate + ethanolamine. It catalyses the reaction a 1-acyl-sn-glycero-3-phosphocholine = a 1-acyl-sn-glycero-2,3-cyclic phosphate + choline. The enzyme catalyses a 1-acyl-sn-glycero-3-phosphoethanolamine = a 1-acyl-sn-glycero-2,3-cyclic phosphate + ethanolamine. Functionally, dermonecrotic toxins cleave the phosphodiester linkage between the phosphate and headgroup of certain phospholipids (sphingolipid and lysolipid substrates), forming an alcohol (often choline) and a cyclic phosphate. This toxin acts on sphingomyelin (SM). It may also act on ceramide phosphoethanolamine (CPE), lysophosphatidylcholine (LPC) and lysophosphatidylethanolamine (LPE), but not on lysophosphatidylserine (LPS), and lysophosphatidylglycerol (LPG). It acts by transphosphatidylation, releasing exclusively cyclic phosphate products as second products. Induces dermonecrosis, hemolysis, increased vascular permeability, edema, inflammatory response, and platelet aggregation. The sequence is that of Dermonecrotic toxin LlSicTox-alphaIV2iii from Loxosceles laeta (South American recluse spider).